Consider the following 73-residue polypeptide: UPF0435 protein Lm4b_01721 (73 aa).

It belongs to the UPF0435 family.

This chain is UPF0435 protein Lm4b_01721, found in Listeria monocytogenes serotype 4b (strain CLIP80459).